We begin with the raw amino-acid sequence, 144 residues long: Putative lipoprotein MAH_0816 (144 aa).

Residues 1-24 (MRWPMQNRTTAVIAVALATTALVA) form the signal peptide. Cys25 is lipidated: N-palmitoyl cysteine. A lipid anchor (S-diacylglycerol cysteine) is attached at Cys25.

Belongs to the mycobacterial 19 kDa antigen family.

The protein localises to the cell membrane. This Mycobacterium avium subsp. hominissuis (strain TH135) protein is Putative lipoprotein MAH_0816.